The chain runs to 300 residues: Bifunctional protein FolD (300 aa).

Residues 168-170 (GRS), S193, and I234 each bind NADP(+).

This sequence belongs to the tetrahydrofolate dehydrogenase/cyclohydrolase family. As to quaternary structure, homodimer.

The catalysed reaction is (6R)-5,10-methylene-5,6,7,8-tetrahydrofolate + NADP(+) = (6R)-5,10-methenyltetrahydrofolate + NADPH. It catalyses the reaction (6R)-5,10-methenyltetrahydrofolate + H2O = (6R)-10-formyltetrahydrofolate + H(+). Its pathway is one-carbon metabolism; tetrahydrofolate interconversion. Functionally, catalyzes the oxidation of 5,10-methylenetetrahydrofolate to 5,10-methenyltetrahydrofolate and then the hydrolysis of 5,10-methenyltetrahydrofolate to 10-formyltetrahydrofolate. This Ehrlichia ruminantium (strain Gardel) protein is Bifunctional protein FolD.